We begin with the raw amino-acid sequence, 1147 residues long: Lon protease homolog 2, peroxisomal (1147 aa).

A Lon N-terminal domain is found at 20–348 (LPTYKLDSNL…EVNRMLESMI (329 aa)). Disordered stretches follow at residues 395–444 (KPDK…DDDD) and 561–626 (KIES…SLTT). Residues 427 to 444 (DGNESNDEYDDDEDDDDD) are compositionally biased toward acidic residues. Basic and acidic residues-rich tracts occupy residues 561 to 574 (KIES…KKNE) and 582 to 597 (KNDK…RSDD). An ATP-binding site is contributed by 651–658 (GPPGTGKT). Residues 903–1131 (SAKCGVVNGL…WDVIKAVWGD (229 aa)) enclose the Lon proteolytic domain. Catalysis depends on residues S1006 and K1049.

Belongs to the peptidase S16 family.

It localises to the peroxisome matrix. The catalysed reaction is Hydrolysis of proteins in presence of ATP.. In terms of biological role, ATP-dependent serine protease that mediates the selective degradation of misfolded and unassembled polypeptides in the peroxisomal matrix. Necessary for type 2 peroxisome targeting signal (PTS2)-containing protein processing and facilitates peroxisome matrix protein import. The polypeptide is Lon protease homolog 2, peroxisomal (Debaryomyces hansenii (strain ATCC 36239 / CBS 767 / BCRC 21394 / JCM 1990 / NBRC 0083 / IGC 2968) (Yeast)).